The following is a 172-amino-acid chain: Large ribosomal subunit protein uL10 (172 aa).

It belongs to the universal ribosomal protein uL10 family. Part of the ribosomal stalk of the 50S ribosomal subunit. The N-terminus interacts with L11 and the large rRNA to form the base of the stalk. The C-terminus forms an elongated spine to which L12 dimers bind in a sequential fashion forming a multimeric L10(L12)X complex.

Its function is as follows. Forms part of the ribosomal stalk, playing a central role in the interaction of the ribosome with GTP-bound translation factors. This is Large ribosomal subunit protein uL10 (rplJ) from Caulobacter vibrioides (strain ATCC 19089 / CIP 103742 / CB 15) (Caulobacter crescentus).